A 207-amino-acid chain; its full sequence is Probable molybdenum cofactor guanylyltransferase (207 aa).

Residues 9 to 11, lysine 21, and aspartate 97 each bind GTP; that span reads LAG. Aspartate 97 is a binding site for Mg(2+).

This sequence belongs to the MobA family. It depends on Mg(2+) as a cofactor.

It localises to the cytoplasm. It carries out the reaction Mo-molybdopterin + GTP + H(+) = Mo-molybdopterin guanine dinucleotide + diphosphate. Transfers a GMP moiety from GTP to Mo-molybdopterin (Mo-MPT) cofactor (Moco or molybdenum cofactor) to form Mo-molybdopterin guanine dinucleotide (Mo-MGD) cofactor. This chain is Probable molybdenum cofactor guanylyltransferase, found in Trichormus variabilis (strain ATCC 29413 / PCC 7937) (Anabaena variabilis).